Reading from the N-terminus, the 294-residue chain is Cytidine deaminase (294 aa).

2 consecutive CMP/dCMP-type deaminase domains span residues 48-168 and 187-294; these read DDDA…FGPK and ALTD…RITF. 89–91 provides a ligand contact to substrate; the sequence is NME. H102 contributes to the Zn(2+) binding site. E104 acts as the Proton donor in catalysis. Zn(2+) contacts are provided by C129 and C132.

It belongs to the cytidine and deoxycytidylate deaminase family. As to quaternary structure, homodimer. Zn(2+) is required as a cofactor.

The enzyme catalyses cytidine + H2O + H(+) = uridine + NH4(+). The catalysed reaction is 2'-deoxycytidine + H2O + H(+) = 2'-deoxyuridine + NH4(+). Functionally, this enzyme scavenges exogenous and endogenous cytidine and 2'-deoxycytidine for UMP synthesis. The protein is Cytidine deaminase of Serratia proteamaculans (strain 568).